The following is a 215-amino-acid chain: Small ribosomal subunit protein uS3 (215 aa).

In terms of domain architecture, KH type-2 spans 38 to 107 (IRDYIKKTYH…KFQLNIEEVK (70 aa)).

This sequence belongs to the universal ribosomal protein uS3 family. As to quaternary structure, part of the 30S ribosomal subunit. Forms a tight complex with proteins S10 and S14.

In terms of biological role, binds the lower part of the 30S subunit head. Binds mRNA in the 70S ribosome, positioning it for translation. The protein is Small ribosomal subunit protein uS3 of Kosmotoga olearia (strain ATCC BAA-1733 / DSM 21960 / TBF 19.5.1).